Consider the following 271-residue polypeptide: Large ribosomal subunit protein uL18 (271 aa).

Basic and acidic residues predominate over residues 245 to 264 (IRENPCPPKKERTKPADAKR). The tract at residues 245–271 (IRENPCPPKKERTKPADAKRWSPQAHL) is disordered.

It belongs to the universal ribosomal protein uL18 family. Component of the large ribosomal subunit (LSU).

It is found in the cytoplasm. Its subcellular location is the nucleus. Its function is as follows. Component of the ribosome, a large ribonucleoprotein complex responsible for the synthesis of proteins in the cell. The small ribosomal subunit (SSU) binds messenger RNAs (mRNAs) and translates the encoded message by selecting cognate aminoacyl-transfer RNA (tRNA) molecules. The large subunit (LSU) contains the ribosomal catalytic site termed the peptidyl transferase center (PTC), which catalyzes the formation of peptide bonds, thereby polymerizing the amino acids delivered by tRNAs into a polypeptide chain. The nascent polypeptides leave the ribosome through a tunnel in the LSU and interact with protein factors that function in enzymatic processing, targeting, and the membrane insertion of nascent chains at the exit of the ribosomal tunnel. The protein is Large ribosomal subunit protein uL18 (RPL5) of Dunaliella salina (Green alga).